We begin with the raw amino-acid sequence, 317 residues long: Acetyl-coenzyme A carboxylase carboxyl transferase subunit beta (317 aa).

The segment at 1–28 (MANNMTDTMTKFDTNNDSASLQQNGNKA) is disordered. The CoA carboxyltransferase N-terminal domain occupies 55-317 (PSTKCSSCHS…LCSVPNVDAQ (263 aa)). Zn(2+) contacts are provided by Cys59, Cys62, Cys78, and Cys81. The C4-type zinc-finger motif lies at 59 to 81 (CSSCHSVITNTALIFNCYVCPHC).

Belongs to the AccD/PCCB family. As to quaternary structure, acetyl-CoA carboxylase is a heterohexamer composed of biotin carboxyl carrier protein (AccB), biotin carboxylase (AccC) and two subunits each of ACCase subunit alpha (AccA) and ACCase subunit beta (AccD). The cofactor is Zn(2+).

It is found in the cytoplasm. The catalysed reaction is N(6)-carboxybiotinyl-L-lysyl-[protein] + acetyl-CoA = N(6)-biotinyl-L-lysyl-[protein] + malonyl-CoA. It participates in lipid metabolism; malonyl-CoA biosynthesis; malonyl-CoA from acetyl-CoA: step 1/1. Functionally, component of the acetyl coenzyme A carboxylase (ACC) complex. Biotin carboxylase (BC) catalyzes the carboxylation of biotin on its carrier protein (BCCP) and then the CO(2) group is transferred by the transcarboxylase to acetyl-CoA to form malonyl-CoA. The protein is Acetyl-coenzyme A carboxylase carboxyl transferase subunit beta of Psychrobacter arcticus (strain DSM 17307 / VKM B-2377 / 273-4).